A 307-amino-acid polypeptide reads, in one-letter code: Protein YIF1A (307 aa).

A disordered region spans residues 1–42 (MNFQQQGYRATKPRARASPPTGGPMLFDDTSSGPPPMNNQNY). At 1 to 148 (MNFQQQGYRA…TPRHDVNAPD (148 aa)) the chain is on the cytoplasmic side. Residues 149–169 (LYIPTMAFITYILLAGMALGI) form a helical membrane-spanning segment. Over 170-184 (QKRFSPEVLGLCAST) the chain is Lumenal. A helical membrane pass occupies residues 185–205 (ALVWMIIEVLVMLLSLYLLTV). Residues 206–213 (HTDLSTFD) are Cytoplasmic-facing. Residues 214 to 236 (LVAYSGYKYVGMILTVFCGLLFG) traverse the membrane as a helical segment. At 237 to 239 (SDG) the chain is on the lumenal side. A helical transmembrane segment spans residues 240–259 (YYVALAWSSCALMFFIVRSL). Residues 260–285 (KMKILSSISADSMGAGASAKPRFRLY) are Cytoplasmic-facing. The chain crosses the membrane as a helical span at residues 286-306 (ITVASAAFQPFIIYWLTAHLV).

This sequence belongs to the YIF1 family.

The protein localises to the endoplasmic reticulum membrane. It localises to the golgi apparatus membrane. It is found in the endoplasmic reticulum-Golgi intermediate compartment membrane. Possible role in transport between endoplasmic reticulum and Golgi. This chain is Protein YIF1A (yif1a), found in Danio rerio (Zebrafish).